A 651-amino-acid polypeptide reads, in one-letter code: Threonine--tRNA ligase (651 aa).

The TGS domain maps to 1–61; that stretch reads MIKITFPDNS…NDDATVKLLK (61 aa). A catalytic region spans residues 242–541; sequence DHRKIGKEMD…LIEHTAGKFP (300 aa). The Zn(2+) site is built by Cys337, His388, and His518.

The protein belongs to the class-II aminoacyl-tRNA synthetase family. As to quaternary structure, homodimer. Zn(2+) is required as a cofactor.

The protein localises to the cytoplasm. The enzyme catalyses tRNA(Thr) + L-threonine + ATP = L-threonyl-tRNA(Thr) + AMP + diphosphate + H(+). Its function is as follows. Catalyzes the attachment of threonine to tRNA(Thr) in a two-step reaction: L-threonine is first activated by ATP to form Thr-AMP and then transferred to the acceptor end of tRNA(Thr). Also edits incorrectly charged L-seryl-tRNA(Thr). The sequence is that of Threonine--tRNA ligase from Parabacteroides distasonis (strain ATCC 8503 / DSM 20701 / CIP 104284 / JCM 5825 / NCTC 11152).